A 426-amino-acid chain; its full sequence is Tyrosine--tRNA ligase (426 aa).

Residue Tyr38 participates in L-tyrosine binding. Residues 43-52 carry the 'HIGH' region motif; the sequence is PTADSLHIGS. 2 residues coordinate L-tyrosine: Tyr176 and Gln180. Positions 236–240 match the 'KMSKS' region motif; that stretch reads KFGKT. Lys239 provides a ligand contact to ATP. In terms of domain architecture, S4 RNA-binding spans 359–426; it reads QTIVEVLTQS…KKLFNLYIWK (68 aa).

This sequence belongs to the class-I aminoacyl-tRNA synthetase family. TyrS type 1 subfamily. In terms of assembly, homodimer.

It is found in the cytoplasm. The catalysed reaction is tRNA(Tyr) + L-tyrosine + ATP = L-tyrosyl-tRNA(Tyr) + AMP + diphosphate + H(+). Functionally, catalyzes the attachment of tyrosine to tRNA(Tyr) in a two-step reaction: tyrosine is first activated by ATP to form Tyr-AMP and then transferred to the acceptor end of tRNA(Tyr). This Aliivibrio salmonicida (strain LFI1238) (Vibrio salmonicida (strain LFI1238)) protein is Tyrosine--tRNA ligase.